The following is a 122-amino-acid chain: MIQSQTQLNVADNSGARKIMCIRIIGSSNRRYAHIGDIIVAVIKDAVPNMTLEKSEVVRAVIVRTRKELKRDNGIILRYDDNAAVIIDKEGNPKGTRIFGAIPRELRKLNFNKIVSLAPEVL.

This sequence belongs to the universal ribosomal protein uL14 family. As to quaternary structure, part of the 50S ribosomal subunit.

It localises to the plastid. In terms of biological role, binds to 23S rRNA. The polypeptide is Large ribosomal subunit protein uL14c (Cuscuta gronovii (Common dodder)).